The primary structure comprises 144 residues: FK506-binding protein 2 (144 aa).

A signal peptide spans 1–20 (MARIIVLIVAFMALIAGVFA). One can recognise a PPIase FKBP-type domain in the interval 48–136 (GDTVSVHYTG…IFTTELVSID (89 aa)). A Prevents secretion from ER motif is present at residues 141–144 (RDEL).

It belongs to the FKBP-type PPIase family. FKBP2 subfamily.

The protein localises to the endoplasmic reticulum. It catalyses the reaction [protein]-peptidylproline (omega=180) = [protein]-peptidylproline (omega=0). Its activity is regulated as follows. Inhibited by both FK506 and rapamycin. PPIases accelerate the folding of proteins. It catalyzes the cis-trans isomerization of proline imidic peptide bonds in oligopeptides. The chain is FK506-binding protein 2 (FPR2) from Yarrowia lipolytica (strain CLIB 122 / E 150) (Yeast).